We begin with the raw amino-acid sequence, 193 residues long: Rho-related protein racB (193 aa).

GTP is bound by residues alanine 13, glycine 15, lysine 16, threonine 17, cysteine 18, tyrosine 32, threonine 35, glycine 60, lysine 116, aspartate 118, and alanine 159. Threonine 17 is a binding site for Mg(2+). 2 short sequence motifs (switch) span residues 26–37 (NAFPTEYVPTVF) and 57–75 (DTAG…YPQT). A Mg(2+)-binding site is contributed by threonine 35. Cysteine 190 carries the cysteine methyl ester modification. The S-geranylgeranyl cysteine moiety is linked to residue cysteine 190. Positions 191 to 193 (LIF) are cleaved as a propeptide — removed in mature form.

Belongs to the small GTPase superfamily. Rho family. Requires Mg(2+) as cofactor.

It localises to the cell membrane. The protein resides in the cytoplasm. The protein localises to the cytoskeleton. The catalysed reaction is GTP + H2O = GDP + phosphate + H(+). With respect to regulation, regulated by guanine nucleotide exchange factors (GEFs) which promote the exchange of bound GDP for free GTP, GTPase activating proteins (GAPs) which increase the GTP hydrolysis activity, and GDP dissociation inhibitors which inhibit the dissociation of the nucleotide from the GTPase. Its function is as follows. Small GTPase which cycles between active GTP-bound and inactive GDP-bound states. This is Rho-related protein racB from Entamoeba histolytica (strain ATCC 30459 / HM-1:IMSS / ABRM).